The chain runs to 347 residues: Ketol-acid reductoisomerase (NADP(+)) (347 aa).

Positions 3–182 constitute a KARI N-terminal Rossmann domain; the sequence is TKMFYDKDID…GSGRAGILET (180 aa). NADP(+) is bound by residues 26-29, arginine 49, serine 53, and 83-86; these read YGAQ and DELQ. Histidine 108 is an active-site residue. Glycine 134 contributes to the NADP(+) binding site. A KARI C-terminal knotted domain is found at 183–328; that stretch reads TFEEETTEDL…KKVRAMMPWI (146 aa). Positions 191, 195, 227, and 231 each coordinate Mg(2+). Substrate is bound at residue serine 252.

Belongs to the ketol-acid reductoisomerase family. It depends on Mg(2+) as a cofactor.

The enzyme catalyses (2R)-2,3-dihydroxy-3-methylbutanoate + NADP(+) = (2S)-2-acetolactate + NADPH + H(+). The catalysed reaction is (2R,3R)-2,3-dihydroxy-3-methylpentanoate + NADP(+) = (S)-2-ethyl-2-hydroxy-3-oxobutanoate + NADPH + H(+). It functions in the pathway amino-acid biosynthesis; L-isoleucine biosynthesis; L-isoleucine from 2-oxobutanoate: step 2/4. Its pathway is amino-acid biosynthesis; L-valine biosynthesis; L-valine from pyruvate: step 2/4. Functionally, involved in the biosynthesis of branched-chain amino acids (BCAA). Catalyzes an alkyl-migration followed by a ketol-acid reduction of (S)-2-acetolactate (S2AL) to yield (R)-2,3-dihydroxy-isovalerate. In the isomerase reaction, S2AL is rearranged via a Mg-dependent methyl migration to produce 3-hydroxy-3-methyl-2-ketobutyrate (HMKB). In the reductase reaction, this 2-ketoacid undergoes a metal-dependent reduction by NADPH to yield (R)-2,3-dihydroxy-isovalerate. The polypeptide is Ketol-acid reductoisomerase (NADP(+)) (Leuconostoc mesenteroides subsp. mesenteroides (strain ATCC 8293 / DSM 20343 / BCRC 11652 / CCM 1803 / JCM 6124 / NCDO 523 / NBRC 100496 / NCIMB 8023 / NCTC 12954 / NRRL B-1118 / 37Y)).